The sequence spans 258 residues: 4-hydroxy-tetrahydrodipicolinate reductase (258 aa).

Residue 10–15 (GCLGRM) coordinates NAD(+). K38 provides a ligand contact to NADP(+). NAD(+) is bound by residues 89-91 (GTT) and 113-116 (AGNM). The Proton donor/acceptor role is filled by H146. A (S)-2,3,4,5-tetrahydrodipicolinate-binding site is contributed by H147. K150 serves as the catalytic Proton donor. 156–157 (GT) is a binding site for (S)-2,3,4,5-tetrahydrodipicolinate.

The protein belongs to the DapB family.

Its subcellular location is the cytoplasm. The catalysed reaction is (S)-2,3,4,5-tetrahydrodipicolinate + NAD(+) + H2O = (2S,4S)-4-hydroxy-2,3,4,5-tetrahydrodipicolinate + NADH + H(+). It carries out the reaction (S)-2,3,4,5-tetrahydrodipicolinate + NADP(+) + H2O = (2S,4S)-4-hydroxy-2,3,4,5-tetrahydrodipicolinate + NADPH + H(+). It functions in the pathway amino-acid biosynthesis; L-lysine biosynthesis via DAP pathway; (S)-tetrahydrodipicolinate from L-aspartate: step 4/4. Catalyzes the conversion of 4-hydroxy-tetrahydrodipicolinate (HTPA) to tetrahydrodipicolinate. This chain is 4-hydroxy-tetrahydrodipicolinate reductase, found in Pelagibacter ubique (strain HTCC1062).